Here is a 486-residue protein sequence, read N- to C-terminus: Zinc metalloproteinase-disintegrin VMP-II (486 aa).

The N-terminal stretch at 1 to 20 (MIQVLLVTICLAVFPYQGSS) is a signal peptide. Residues 21–190 (IILESGNVND…KASQSNLPPE (170 aa)) constitute a propeptide that is removed on maturation. Glutamine 191 is modified (pyrrolidone carboxylic acid). Residues 197-394 (RYIELVVVAD…HYTTCLYNEP (198 aa)) enclose the Peptidase M12B domain. 2 residues coordinate Ca(2+): glutamate 200 and aspartate 284. Disulfide bonds link cysteine 308-cysteine 389, cysteine 348-cysteine 372, and cysteine 350-cysteine 355. Histidine 333 contacts Zn(2+). Residue glutamate 334 is part of the active site. Positions 337 and 343 each coordinate Zn(2+). Cysteine 389 and asparagine 392 together coordinate Ca(2+). A Disintegrin domain is found at 402-486 (PPVCGNYYTE…AECPNKGYYG (85 aa)). 7 disulfide bridges follow: cysteine 405–cysteine 424, cysteine 416–cysteine 434, cysteine 418–cysteine 429, cysteine 428–cysteine 451, cysteine 442–cysteine 448, cysteine 447–cysteine 472, and cysteine 460–cysteine 479. The Cell attachment site motif lies at 464-466 (RGD).

This sequence belongs to the venom metalloproteinase (M12B) family. P-II subfamily. P-IIb sub-subfamily. In terms of assembly, monomer. Zn(2+) serves as cofactor. As to expression, expressed by the venom gland.

Its subcellular location is the secreted. In terms of biological role, snake venom zinc metalloproteinase that inhibits ADP-induced platelet aggregation (probably by binding integrin alpha-IIb/beta-3 (ITGA2B/ITGB3)) and degrades fibrinogen. This chain is Zinc metalloproteinase-disintegrin VMP-II, found in Crotalus atrox (Western diamondback rattlesnake).